The sequence spans 75 residues: Tautomerase PptA (75 aa).

The active-site Proton acceptor; via imino nitrogen is the P2.

The protein belongs to the 4-oxalocrotonate tautomerase family. PptA subfamily. In terms of assembly, homodimer.

It is found in the cytoplasm. The polypeptide is Tautomerase PptA (Shigella sonnei (strain Ss046)).